Reading from the N-terminus, the 1741-residue chain is S-layer protein (1741 aa).

The span at 894–904 (SFTSDSANGSG) shows a compositional bias: polar residues. Positions 894-913 (SFTSDSANGSGHSVEGGTGD) are disordered.

In terms of processing, glycosylated.

It localises to the secreted. The protein localises to the cell wall. Its subcellular location is the S-layer. S-layer protein. The S-layer is a paracrystalline mono-layered assembly of proteins which coats the surface of bacteria. Under laboratory conditions, has a supportive but not a critical role in the function of the cyanobacterium. Shows no apparent hemolytic activity against sheep erythrocytes, however, a slight hemolytic activity is detected during the conformational change caused by the rebinding of Ca(2+). The protein is S-layer protein of Synechocystis sp. (strain ATCC 27184 / PCC 6803 / Kazusa).